The chain runs to 190 residues: ATP synthase subunit b (190 aa).

The chain crosses the membrane as a helical span at residues leucine 34–phenylalanine 54.

This sequence belongs to the ATPase B chain family. In terms of assembly, F-type ATPases have 2 components, F(1) - the catalytic core - and F(0) - the membrane proton channel. F(1) has five subunits: alpha(3), beta(3), gamma(1), delta(1), epsilon(1). F(0) has four main subunits: a(1), b(1), b'(1) and c(10-14). The alpha and beta chains form an alternating ring which encloses part of the gamma chain. F(1) is attached to F(0) by a central stalk formed by the gamma and epsilon chains, while a peripheral stalk is formed by the delta, b and b' chains.

Its subcellular location is the cellular thylakoid membrane. Its function is as follows. F(1)F(0) ATP synthase produces ATP from ADP in the presence of a proton or sodium gradient. F-type ATPases consist of two structural domains, F(1) containing the extramembraneous catalytic core and F(0) containing the membrane proton channel, linked together by a central stalk and a peripheral stalk. During catalysis, ATP synthesis in the catalytic domain of F(1) is coupled via a rotary mechanism of the central stalk subunits to proton translocation. Functionally, component of the F(0) channel, it forms part of the peripheral stalk, linking F(1) to F(0). This Nostoc punctiforme (strain ATCC 29133 / PCC 73102) protein is ATP synthase subunit b.